Reading from the N-terminus, the 445-residue chain is Phosphoglucosamine mutase (445 aa).

The Phosphoserine intermediate role is filled by serine 102. Serine 102, aspartate 241, aspartate 243, and aspartate 245 together coordinate Mg(2+). Serine 102 carries the post-translational modification Phosphoserine.

Belongs to the phosphohexose mutase family. Mg(2+) is required as a cofactor. Post-translationally, activated by phosphorylation.

The catalysed reaction is alpha-D-glucosamine 1-phosphate = D-glucosamine 6-phosphate. Catalyzes the conversion of glucosamine-6-phosphate to glucosamine-1-phosphate. In Shewanella oneidensis (strain ATCC 700550 / JCM 31522 / CIP 106686 / LMG 19005 / NCIMB 14063 / MR-1), this protein is Phosphoglucosamine mutase.